A 261-amino-acid chain; its full sequence is Ribosomal RNA small subunit methyltransferase A (261 aa).

Residues asparagine 15, isoleucine 17, glycine 42, glutamate 64, aspartate 90, and asparagine 109 each contribute to the S-adenosyl-L-methionine site.

Belongs to the class I-like SAM-binding methyltransferase superfamily. rRNA adenine N(6)-methyltransferase family. RsmA subfamily.

It localises to the cytoplasm. The enzyme catalyses adenosine(1518)/adenosine(1519) in 16S rRNA + 4 S-adenosyl-L-methionine = N(6)-dimethyladenosine(1518)/N(6)-dimethyladenosine(1519) in 16S rRNA + 4 S-adenosyl-L-homocysteine + 4 H(+). Specifically dimethylates two adjacent adenosines (A1518 and A1519) in the loop of a conserved hairpin near the 3'-end of 16S rRNA in the 30S particle. May play a critical role in biogenesis of 30S subunits. The chain is Ribosomal RNA small subunit methyltransferase A from Wolbachia sp. subsp. Brugia malayi (strain TRS).